The chain runs to 502 residues: Protein MGF 505-5R (502 aa).

Belongs to the asfivirus MGF 505 family.

In terms of biological role, plays a role in virus cell tropism, and may be required for efficient virus replication in macrophages. In Ornithodoros (relapsing fever ticks), this protein is Protein MGF 505-5R.